We begin with the raw amino-acid sequence, 249 residues long: Small ribosomal subunit protein uS2 (249 aa).

Belongs to the universal ribosomal protein uS2 family.

The protein is Small ribosomal subunit protein uS2 of Bordetella parapertussis (strain 12822 / ATCC BAA-587 / NCTC 13253).